Consider the following 618-residue polypeptide: MGKIVGIDLGTTNSVVAVMEGGKPTVITNAEGFRTTPSVVAYTKTGDRLVGQIAKRQAVLNPGNTFYSVKRFIGRKFDEVTEEAKQVPYKVTGTQNVRIECPALQTSFTPEEISAQVLRKLAEDASKYIGEPVTQAVITVPAYFNDSQRQATKDAGKIAGLEVLRIINEPTAASLAYGLDKKKNETILVFDLGGGTFDVSILEVGDGVFEVLSTSGDTHLGGDDFDKKLVDFFIEEFQKLENINLREDQQALQRLTEAAEKAKIELSSVTQTEITLPFLSLTPSGPKHFDTTLNRAKFEELCSTLIDRCRIPVETALKDAKLTKEDIDEVVLVGGSTRIPAVRELVQKVLDKVPKQSVNPDEVVAVGAAVQAGVLAGEVKDIVLLDVTPLSLGVETLGGVMSKIIVRNTTIPTQKSELFSTATDGQTNVEIHVLQGERGFAKDNKSLGTFRLDGIAPAPRGVPQIEVTFDIDANGILSVTAKDKGTGKEKSITITGASTLSQDEVERMVQEAEKNAAQDKENRQKIELRNQAESLINQAERQLKEFKLEPNVQAPIEQTIQQLQTALKEDNLEQVQSLCQELQNSLLEIGKQVYSKTETTTPNKNEEDVIDASFSEEK.

Positions 595–618 (SKTETTTPNKNEEDVIDASFSEEK) are disordered.

Belongs to the heat shock protein 70 family.

It localises to the plastid. The protein resides in the cyanelle. Functionally, acts as a chaperone. In Cyanophora paradoxa, this protein is Chaperone protein dnaK (dnaK-A).